We begin with the raw amino-acid sequence, 223 residues long: Na(+)-translocating NADH-quinone reductase subunit D (223 aa).

The next 5 membrane-spanning stretches (helical) occupy residues 42–62, 66–86, 103–123, 131–151, and 178–198; these read TVMA…ISMI, IPSS…VIVV, VFVG…AFAM, FFDG…LGFI, and NGLL…IWAL.

This sequence belongs to the NqrDE/RnfAE family. In terms of assembly, composed of six subunits; NqrA, NqrB, NqrC, NqrD, NqrE and NqrF.

It is found in the cell inner membrane. It catalyses the reaction a ubiquinone + n Na(+)(in) + NADH + H(+) = a ubiquinol + n Na(+)(out) + NAD(+). Functionally, NQR complex catalyzes the reduction of ubiquinone-1 to ubiquinol by two successive reactions, coupled with the transport of Na(+) ions from the cytoplasm to the periplasm. NqrA to NqrE are probably involved in the second step, the conversion of ubisemiquinone to ubiquinol. The polypeptide is Na(+)-translocating NADH-quinone reductase subunit D (Pseudomonas paraeruginosa (strain DSM 24068 / PA7) (Pseudomonas aeruginosa (strain PA7))).